Reading from the N-terminus, the 234-residue chain is BTB/POZ domain-containing protein KCTD5 (234 aa).

Residue alanine 2 is modified to N-acetylalanine. One can recognise a BTB domain in the interval 44 to 146; sequence KWVRLNVGGT…LVKDKIRERD (103 aa). Positions 211–234 are disordered; it reads NSPHGPASEPSEKAKILQERGSRM. A compositionally biased stretch (basic and acidic residues) spans 220–234; it reads PSEKAKILQERGSRM.

In terms of assembly, homopentamer. Interacts (via C-terminus) with GRASP55/GORASP2. Interacts with CUL3 and with ubiquitinated proteins. Interacts with CRY1.

Its subcellular location is the cytoplasm. It is found in the cytosol. It localises to the nucleus. Its function is as follows. Its interaction with CUL3 suggests that it may act as a substrate adapter in some E3 ligase complex. Does not affect the function of Kv channel Kv2.1/KCNB1, Kv1.2/KCNA2, Kv4.2/KCND2 and Kv3.4/KCNC4. The polypeptide is BTB/POZ domain-containing protein KCTD5 (KCTD5) (Bos taurus (Bovine)).